The primary structure comprises 963 residues: Protein translocase subunit SecA (963 aa).

Residues Q87, 105-109, and D512 each bind ATP; that span reads GEGKT. Disordered stretches follow at residues 868-909 and 924-963; these read GPVM…EDFT and QFVG…CHGS. A compositionally biased stretch (acidic residues) spans 874–886; sequence PDEEEDGDEDSVE. The Zn(2+) site is built by C949, C951, C960, and H961.

It belongs to the SecA family. As to quaternary structure, monomer and homodimer. Part of the essential Sec protein translocation apparatus which comprises SecA, SecYEG and auxiliary proteins SecDF. Other proteins may also be involved. The cofactor is Zn(2+).

It is found in the cell inner membrane. The protein localises to the cytoplasm. It catalyses the reaction ATP + H2O + cellular proteinSide 1 = ADP + phosphate + cellular proteinSide 2.. Functionally, part of the Sec protein translocase complex. Interacts with the SecYEG preprotein conducting channel. Has a central role in coupling the hydrolysis of ATP to the transfer of proteins into and across the cell membrane, serving as an ATP-driven molecular motor driving the stepwise translocation of polypeptide chains across the membrane. This is Protein translocase subunit SecA from Solibacter usitatus (strain Ellin6076).